The chain runs to 342 residues: Probable dual-specificity RNA methyltransferase RlmN (342 aa).

Glu91 (proton acceptor) is an active-site residue. One can recognise a Radical SAM core domain in the interval Tyr97–Glu327. Cys104 and Cys332 are joined by a disulfide. [4Fe-4S] cluster-binding residues include Cys111, Cys115, and Cys118. Residues Gly158–Glu159, Ser190, Ser213–His215, and Asn289 contribute to the S-adenosyl-L-methionine site. Cys332 (S-methylcysteine intermediate) is an active-site residue.

The protein belongs to the radical SAM superfamily. RlmN family. [4Fe-4S] cluster is required as a cofactor.

The protein resides in the cytoplasm. The catalysed reaction is adenosine(2503) in 23S rRNA + 2 reduced [2Fe-2S]-[ferredoxin] + 2 S-adenosyl-L-methionine = 2-methyladenosine(2503) in 23S rRNA + 5'-deoxyadenosine + L-methionine + 2 oxidized [2Fe-2S]-[ferredoxin] + S-adenosyl-L-homocysteine. The enzyme catalyses adenosine(37) in tRNA + 2 reduced [2Fe-2S]-[ferredoxin] + 2 S-adenosyl-L-methionine = 2-methyladenosine(37) in tRNA + 5'-deoxyadenosine + L-methionine + 2 oxidized [2Fe-2S]-[ferredoxin] + S-adenosyl-L-homocysteine. Specifically methylates position 2 of adenine 2503 in 23S rRNA and position 2 of adenine 37 in tRNAs. In Carboxydothermus hydrogenoformans (strain ATCC BAA-161 / DSM 6008 / Z-2901), this protein is Probable dual-specificity RNA methyltransferase RlmN.